The primary structure comprises 217 residues: External core antigen (217 aa).

The first 20 residues, 1 to 20, serve as a signal peptide directing secretion; sequence MYLFHLCLVFACVPCPTVQA. The segment at 26–28 is HBEAG; sequence GWL. Positions 166 to 217 are disordered; that stretch reads APILSTLPEHTVIRRRGGSRAARSPRRRTPSPRRRRSQSPRRRRSQSPASNC. A compositionally biased stretch (basic residues) spans 178 to 210; that stretch reads IRRRGGSRAARSPRRRTPSPRRRRSQSPRRRRS. One copy of the 1; half-length repeat lies at 189–195; sequence SPRRRTP. The 3 X 8 AA repeats of S-P-R-R-R-R-S-Q stretch occupies residues 189 to 211; that stretch reads SPRRRTPSPRRRRSQSPRRRRSQ. Positions 189–217 are excised as a propeptide; that stretch reads SPRRRTPSPRRRRSQSPRRRRSQSPASNC. 2 repeat units span residues 196-203 and 204-211.

It belongs to the orthohepadnavirus precore antigen family. As to quaternary structure, homodimerizes. Post-translationally, phosphorylated. Cleaved by host furin.

Its subcellular location is the secreted. The protein resides in the host nucleus. In terms of biological role, may regulate immune response to the intracellular capsid in acting as a T-cell tolerogen, by having an immunoregulatory effect which prevents destruction of infected cells by cytotoxic T-cells. This immune regulation may predispose to chronicity during perinatal infections and prevent severe liver injury during adult infections. The polypeptide is External core antigen (Otospermophilus beecheyi (California ground squirrel)).